Consider the following 224-residue polypeptide: Ribose-5-phosphate isomerase A (224 aa).

Substrate-binding positions include 26–29 (TGST), 82–85 (DGAD), and 95–98 (KGGG). Glu-104 functions as the Proton acceptor in the catalytic mechanism. Substrate is bound at residue Lys-122.

The protein belongs to the ribose 5-phosphate isomerase family. Homodimer.

The catalysed reaction is aldehydo-D-ribose 5-phosphate = D-ribulose 5-phosphate. It participates in carbohydrate degradation; pentose phosphate pathway; D-ribose 5-phosphate from D-ribulose 5-phosphate (non-oxidative stage): step 1/1. Catalyzes the reversible conversion of ribose-5-phosphate to ribulose 5-phosphate. In Streptococcus suis (strain 98HAH33), this protein is Ribose-5-phosphate isomerase A.